A 559-amino-acid chain; its full sequence is Probable alpha-(1-&gt;6)-mannopyranosyltransferase MSMEG_3120/MSMEI_3041 (559 aa).

12 helical membrane passes run 41 to 61, 81 to 101, 202 to 222, 247 to 267, 300 to 316, 321 to 340, 355 to 375, 386 to 406, 419 to 439, 455 to 475, 480 to 500, and 507 to 527; these read FGAT…ARPV, VSLT…LMLG, IVEA…LIVW, LLFM…GLML, WQPM…IAMS, LPSL…RWGG, ISLA…GWLF, WMSP…LLGL, AIGV…VLRG, VLLF…PLAA, PGFR…GPTA, and LFQI…LIAL. Over residues 535–548 the composition is skewed to pro residues; sequence RPAPEPPARPPEQP. Residues 535–559 are disordered; that stretch reads RPAPEPPARPPEQPAPADDAYAESP.

The protein belongs to the MptA/B family.

It localises to the membrane. Functionally, catalyzes the addition of alpha-(1-&gt;6)-mannose residue. The polypeptide is Probable alpha-(1-&gt;6)-mannopyranosyltransferase MSMEG_3120/MSMEI_3041 (Mycolicibacterium smegmatis (strain ATCC 700084 / mc(2)155) (Mycobacterium smegmatis)).